A 314-amino-acid chain; its full sequence is DNA-directed RNA polymerase subunit alpha (314 aa).

The segment at 1–229 is alpha N-terminal domain (alpha-NTD); the sequence is MLESKLKAPV…EHLNYFANPE (229 aa). The segment at 246–314 is alpha C-terminal domain (alpha-CTD); sequence SAEEDLDLPL…LAKKGFTLKE (69 aa).

Belongs to the RNA polymerase alpha chain family. In terms of assembly, homodimer. The RNAP catalytic core consists of 2 alpha, 1 beta, 1 beta' and 1 omega subunit. When a sigma factor is associated with the core the holoenzyme is formed, which can initiate transcription.

It catalyses the reaction RNA(n) + a ribonucleoside 5'-triphosphate = RNA(n+1) + diphosphate. Functionally, DNA-dependent RNA polymerase catalyzes the transcription of DNA into RNA using the four ribonucleoside triphosphates as substrates. This Thermus aquaticus protein is DNA-directed RNA polymerase subunit alpha (rpoA).